Reading from the N-terminus, the 214-residue chain is A-type ATP synthase subunit D (214 aa).

Belongs to the V-ATPase D subunit family. As to quaternary structure, has multiple subunits with at least A(3), B(3), C, D, E, F, H, I and proteolipid K(x).

The protein resides in the cell membrane. Functionally, component of the A-type ATP synthase that produces ATP from ADP in the presence of a proton gradient across the membrane. In Thermococcus gammatolerans (strain DSM 15229 / JCM 11827 / EJ3), this protein is A-type ATP synthase subunit D.